A 312-amino-acid chain; its full sequence is uncharacterized protein (312 aa).

Disordered stretches follow at residues 1 to 26 and 45 to 106; these read MQKD…AMVA and GNLQ…LPSG. Positions 8–17 are enriched in basic residues; it reads RFQRNKKKIN. Positions 68–77 are enriched in basic and acidic residues; it reads NGKRNGDKVR. The span at 85 to 103 shows a compositional bias: polar residues; that stretch reads GHSSYAGSRISGGNSNSHL.

This is an uncharacterized protein from Schizosaccharomyces pombe (strain 972 / ATCC 24843) (Fission yeast).